The following is a 190-amino-acid chain: Xanthine phosphoribosyltransferase (190 aa).

Xanthine is bound by residues L20 and N27. 129–133 is a binding site for 5-phospho-alpha-D-ribose 1-diphosphate; that stretch reads ANGAA. Residue K157 participates in xanthine binding.

It belongs to the purine/pyrimidine phosphoribosyltransferase family. Xpt subfamily. In terms of assembly, homodimer.

It localises to the cytoplasm. The catalysed reaction is XMP + diphosphate = xanthine + 5-phospho-alpha-D-ribose 1-diphosphate. Its pathway is purine metabolism; XMP biosynthesis via salvage pathway; XMP from xanthine: step 1/1. Its function is as follows. Converts the preformed base xanthine, a product of nucleic acid breakdown, to xanthosine 5'-monophosphate (XMP), so it can be reused for RNA or DNA synthesis. This Laribacter hongkongensis (strain HLHK9) protein is Xanthine phosphoribosyltransferase.